Consider the following 412-residue polypeptide: GTPase Obg (412 aa).

Residues 1–159 (MKFLDQAKIF…RWIWLRLKMI (159 aa)) form the Obg domain. The region spanning 160–327 (ADAGLVGLPN…ILARLFTHIR (168 aa)) is the OBG-type G domain. GTP contacts are provided by residues 166–173 (GLPNAGKS), 191–195 (FTTLH), 212–215 (DIPG), 279–282 (NKCD), and 308–310 (SGV). Positions 173 and 193 each coordinate Mg(2+). Positions 335–412 (AVPAASPIFG…ADDEEDDAEE (78 aa)) are disordered. The span at 385 to 412 (NDGDEVDEDYDDEDLEEVADDEEDDAEE) shows a compositional bias: acidic residues.

This sequence belongs to the TRAFAC class OBG-HflX-like GTPase superfamily. OBG GTPase family. In terms of assembly, monomer. It depends on Mg(2+) as a cofactor.

Its subcellular location is the cytoplasm. Its function is as follows. An essential GTPase which binds GTP, GDP and possibly (p)ppGpp with moderate affinity, with high nucleotide exchange rates and a fairly low GTP hydrolysis rate. Plays a role in control of the cell cycle, stress response, ribosome biogenesis and in those bacteria that undergo differentiation, in morphogenesis control. This chain is GTPase Obg, found in Paramagnetospirillum magneticum (strain ATCC 700264 / AMB-1) (Magnetospirillum magneticum).